A 162-amino-acid chain; its full sequence is 6,7-dimethyl-8-ribityllumazine synthase (162 aa).

Residues F23, 61–63 (AYE), and 85–87 (AVI) contribute to the 5-amino-6-(D-ribitylamino)uracil site. 90 to 91 (DT) contacts (2S)-2-hydroxy-3-oxobutyl phosphate. H93 acts as the Proton donor in catalysis. A 5-amino-6-(D-ribitylamino)uracil-binding site is contributed by F118. A (2S)-2-hydroxy-3-oxobutyl phosphate-binding site is contributed by R132.

This sequence belongs to the DMRL synthase family.

It catalyses the reaction (2S)-2-hydroxy-3-oxobutyl phosphate + 5-amino-6-(D-ribitylamino)uracil = 6,7-dimethyl-8-(1-D-ribityl)lumazine + phosphate + 2 H2O + H(+). It participates in cofactor biosynthesis; riboflavin biosynthesis; riboflavin from 2-hydroxy-3-oxobutyl phosphate and 5-amino-6-(D-ribitylamino)uracil: step 1/2. Functionally, catalyzes the formation of 6,7-dimethyl-8-ribityllumazine by condensation of 5-amino-6-(D-ribitylamino)uracil with 3,4-dihydroxy-2-butanone 4-phosphate. This is the penultimate step in the biosynthesis of riboflavin. This Synechococcus sp. (strain CC9902) protein is 6,7-dimethyl-8-ribityllumazine synthase.